A 371-amino-acid chain; its full sequence is Protein NDRG2 (371 aa).

A disordered region spans residues 1-21; the sequence is MAELQEVQITEEKPLLPGQTP. At Ala2 the chain carries N-acetylalanine. Thr20 is subject to Phosphothreonine. A phosphoserine mark is found at Ser326 and Ser328. At Thr330 the chain carries Phosphothreonine. Residue Ser332 is modified to Phosphoserine. Position 334 is a phosphothreonine (Thr334). Positions 334 to 371 are disordered; that stretch reads TSAASVDGNRSRSRTLSQSSESGTLSSGPPGHTMEVSC. Ser335, Ser338, and Ser344 each carry phosphoserine. Residues 347–361 show a composition bias toward low complexity; the sequence is RTLSQSSESGTLSSG. Thr348 is modified (phosphothreonine). Phosphoserine is present on residues Ser350, Ser352, Ser353, and Ser355. Thr357 carries the post-translational modification Phosphothreonine. Ser370 bears the Phosphoserine mark.

This sequence belongs to the NDRG family. In terms of assembly, interacts with CTNNB1.

The protein localises to the cytoplasm. It is found in the perinuclear region. It localises to the cell projection. Its subcellular location is the growth cone. In terms of biological role, contributes to the regulation of the Wnt signaling pathway. Down-regulates CTNNB1-mediated transcriptional activation of target genes, such as CCND1, and may thereby act as tumor suppressor. May be involved in dendritic cell and neuron differentiation. In Pongo abelii (Sumatran orangutan), this protein is Protein NDRG2 (NDRG2).